We begin with the raw amino-acid sequence, 295 residues long: Small ribosomal subunit protein uS3 (295 aa).

Positions 39-107 constitute a KH type-2 domain; that stretch reads VREYLKKKLK…PVAVNIEEVR (69 aa). The segment at 213–295 is disordered; it reads GTGAKMIEVA…AAAADGAKTE (83 aa). Residues 224 to 245 show a composition bias toward basic and acidic residues; the sequence is EERKPRGPRRDARPGDRPDRGA. 2 stretches are compositionally biased toward low complexity: residues 246–255 and 283–295; these read PRGAPRAPRG and AAPA…AKTE.

The protein belongs to the universal ribosomal protein uS3 family. As to quaternary structure, part of the 30S ribosomal subunit. Forms a tight complex with proteins S10 and S14.

Its function is as follows. Binds the lower part of the 30S subunit head. Binds mRNA in the 70S ribosome, positioning it for translation. This is Small ribosomal subunit protein uS3 from Polaromonas naphthalenivorans (strain CJ2).